The primary structure comprises 206 residues: VEL1-related protein SCY_5430 (206 aa).

The signal sequence occupies residues 1–19 (MSFLNIFTFFSVLVSVATA).

Belongs to the VEL1 family.

Its subcellular location is the cytoplasm. The protein resides in the cytosol. This is VEL1-related protein SCY_5430 from Saccharomyces cerevisiae (strain YJM789) (Baker's yeast).